A 423-amino-acid polypeptide reads, in one-letter code: Dihydroorotase (423 aa).

Zn(2+)-binding residues include His-56 and His-58. Residues His-58–Arg-60 and Asn-89 contribute to the substrate site. Residues Lys-137, His-168, His-227, and Asp-302 each coordinate Zn(2+). The residue at position 137 (Lys-137) is an N6-carboxylysine. Asp-302 is an active-site residue. Residue His-306 coordinates substrate.

Belongs to the metallo-dependent hydrolases superfamily. DHOase family. Class I DHOase subfamily. Zn(2+) serves as cofactor.

The catalysed reaction is (S)-dihydroorotate + H2O = N-carbamoyl-L-aspartate + H(+). Its pathway is pyrimidine metabolism; UMP biosynthesis via de novo pathway; (S)-dihydroorotate from bicarbonate: step 3/3. Functionally, catalyzes the reversible cyclization of carbamoyl aspartate to dihydroorotate. In Methanocaldococcus jannaschii (strain ATCC 43067 / DSM 2661 / JAL-1 / JCM 10045 / NBRC 100440) (Methanococcus jannaschii), this protein is Dihydroorotase.